Reading from the N-terminus, the 562-residue chain is NAD-dependent malic enzyme (562 aa).

Y101 (proton donor) is an active-site residue. R154 is a binding site for NAD(+). The active-site Proton acceptor is the K172. A divalent metal cation is bound by residues E243, D244, and D267. Residues D267 and N415 each contribute to the NAD(+) site.

This sequence belongs to the malic enzymes family. In terms of assembly, homotetramer. Mg(2+) serves as cofactor. It depends on Mn(2+) as a cofactor.

The catalysed reaction is (S)-malate + NAD(+) = pyruvate + CO2 + NADH. It carries out the reaction oxaloacetate + H(+) = pyruvate + CO2. The sequence is that of NAD-dependent malic enzyme from Shewanella sp. (strain ANA-3).